The sequence spans 147 residues: Transthyretin (147 aa).

A signal peptide spans 1–20; the sequence is MASHRLLLLCLAGLVFVSEA. Sulfocysteine is present on C30. Position 35 (K35) interacts with L-thyroxine. A Phosphoserine modification is found at S72. E74 provides a ligand contact to L-thyroxine. A glycan (N-linked (GlcNAc...) asparagine) is linked at N118. Residue S137 coordinates L-thyroxine.

It belongs to the transthyretin family. Homotetramer. Dimer of dimers. In the homotetramer, subunits assemble around a central channel that can accommodate two ligand molecules. Interacts with RBP4. Post-translationally, sulfonation of the reactive cysteine Cys-30 enhances the stability of the native conformation of TTR, avoiding misassembly of the protein leading to amyloid formation.

It is found in the secreted. In terms of biological role, thyroid hormone-binding protein. Probably transports thyroxine from the bloodstream to the brain. In Macaca fascicularis (Crab-eating macaque), this protein is Transthyretin (TTR).